The following is a 65-amino-acid chain: Large ribosomal subunit protein bL35 (65 aa).

Residues Met-1 to Gln-26 form a disordered region. The segment covering Ala-10–Gln-26 has biased composition (basic residues).

Belongs to the bacterial ribosomal protein bL35 family.

This chain is Large ribosomal subunit protein bL35, found in Histophilus somni (strain 2336) (Haemophilus somnus).